A 307-amino-acid chain; its full sequence is Agmatinase (307 aa).

Mn(2+) is bound by residues histidine 126, aspartate 149, histidine 151, aspartate 153, aspartate 230, and aspartate 232.

This sequence belongs to the arginase family. Agmatinase subfamily. It depends on Mn(2+) as a cofactor.

It carries out the reaction agmatine + H2O = urea + putrescine. Its pathway is amine and polyamine biosynthesis; putrescine biosynthesis via agmatine pathway; putrescine from agmatine: step 1/1. In terms of biological role, catalyzes the formation of putrescine from agmatine. In Sodalis glossinidius (strain morsitans), this protein is Agmatinase.